Reading from the N-terminus, the 450-residue chain is Glucose-6-phosphate isomerase (450 aa).

Thr39 bears the Phosphothreonine mark. Glu291 (proton donor) is an active-site residue. Catalysis depends on residues His312 and Lys426.

It belongs to the GPI family.

It localises to the cytoplasm. It carries out the reaction alpha-D-glucose 6-phosphate = beta-D-fructose 6-phosphate. It participates in carbohydrate biosynthesis; gluconeogenesis. The protein operates within carbohydrate degradation; glycolysis; D-glyceraldehyde 3-phosphate and glycerone phosphate from D-glucose: step 2/4. Its function is as follows. Catalyzes the reversible isomerization of glucose-6-phosphate to fructose-6-phosphate. The sequence is that of Glucose-6-phosphate isomerase from Bacillus cereus (strain G9842).